The primary structure comprises 546 residues: Peroxisomal OPC-8:0-CoA ligase 1 (546 aa).

ATP contacts are provided by Ser-197, Ser-198, Gly-199, Thr-200, Thr-201, and Lys-205. Lys-265 serves as a coordination point for CoA. The segment at 267 to 338 is SBD1; that stretch reads EMHEMMSAIG…EKYPTVKILQ (72 aa). Gln-338, Gly-339, Thr-343, Asp-424, and Arg-439 together coordinate ATP. The interval 339 to 403 is SBD2; sequence GYGLTESTGI…LKGPSIMKGY (65 aa). Lys-447 and Gly-448 together coordinate CoA. Residue Lys-530 coordinates ATP. Positions 544-546 match the Microbody targeting signal motif; that stretch reads SKL.

The protein belongs to the ATP-dependent AMP-binding enzyme family. It depends on Mg(2+) as a cofactor. As to expression, expressed at low levels in seedlings, cotyledons, leaves, hypocotyls and roots.

The protein resides in the peroxisome. It carries out the reaction (9S,13S,15Z)-12-oxophyto-10,15-dienoate + ATP + CoA = (10Z,15Z)-12-oxophytodienoyl-CoA + AMP + diphosphate. It catalyses the reaction (1S,2S)-OPC-8 + ATP + CoA = OPC8-CoA + AMP + diphosphate. The catalysed reaction is hexadecanoate + ATP + CoA = hexadecanoyl-CoA + AMP + diphosphate. The enzyme catalyses (9Z)-octadecenoate + ATP + CoA = (9Z)-octadecenoyl-CoA + AMP + diphosphate. It carries out the reaction tetradecanoate + ATP + CoA = tetradecanoyl-CoA + AMP + diphosphate. It catalyses the reaction decanoate + ATP + CoA = decanoyl-CoA + AMP + diphosphate. The catalysed reaction is dodecanoate + ATP + CoA = dodecanoyl-CoA + AMP + diphosphate. The enzyme catalyses octadecanoate + ATP + CoA = octadecanoyl-CoA + AMP + diphosphate. It carries out the reaction OPC-6 + ATP + CoA = OPC-6-CoA + AMP + diphosphate. It catalyses the reaction dinor-OPDA + ATP + CoA = dinor-OPDA-CoA + AMP + diphosphate. Its function is as follows. Contributes to jasmonic acid biosynthesis by initiating the beta-oxidative chain shortening of its precursors. Converts 12-oxo-phytodienoic acid (OPDA) and 3-oxo-2-(2'-pentenyl)-cyclopentane-1-octanoic acid (OPC-8:0) into OPDA-CoA and OPC-8:0-CoA, respectively. Follows a two-step reaction mechanism, wherein the carboxylate substrate first undergoes adenylation by ATP, followed by a thioesterification in the presence of CoA to yield the final CoA thioester. This chain is Peroxisomal OPC-8:0-CoA ligase 1, found in Arabidopsis thaliana (Mouse-ear cress).